The primary structure comprises 287 residues: Bifunctional protein FolD (287 aa).

NADP(+) contacts are provided by residues Gly-166–Ser-168 and Ile-232.

Belongs to the tetrahydrofolate dehydrogenase/cyclohydrolase family. In terms of assembly, homodimer.

The catalysed reaction is (6R)-5,10-methylene-5,6,7,8-tetrahydrofolate + NADP(+) = (6R)-5,10-methenyltetrahydrofolate + NADPH. The enzyme catalyses (6R)-5,10-methenyltetrahydrofolate + H2O = (6R)-10-formyltetrahydrofolate + H(+). It participates in one-carbon metabolism; tetrahydrofolate interconversion. In terms of biological role, catalyzes the oxidation of 5,10-methylenetetrahydrofolate to 5,10-methenyltetrahydrofolate and then the hydrolysis of 5,10-methenyltetrahydrofolate to 10-formyltetrahydrofolate. This chain is Bifunctional protein FolD, found in Aeromonas hydrophila subsp. hydrophila (strain ATCC 7966 / DSM 30187 / BCRC 13018 / CCUG 14551 / JCM 1027 / KCTC 2358 / NCIMB 9240 / NCTC 8049).